A 235-amino-acid chain; its full sequence is Putative N-acetylmannosamine-6-phosphate 2-epimerase (235 aa).

Belongs to the NanE family.

It catalyses the reaction an N-acyl-D-glucosamine 6-phosphate = an N-acyl-D-mannosamine 6-phosphate. It functions in the pathway amino-sugar metabolism; N-acetylneuraminate degradation; D-fructose 6-phosphate from N-acetylneuraminate: step 3/5. Functionally, converts N-acetylmannosamine-6-phosphate (ManNAc-6-P) to N-acetylglucosamine-6-phosphate (GlcNAc-6-P). The sequence is that of Putative N-acetylmannosamine-6-phosphate 2-epimerase from Aliivibrio fischeri (strain ATCC 700601 / ES114) (Vibrio fischeri).